We begin with the raw amino-acid sequence, 166 residues long: Regulator of ribonuclease activity A (166 aa).

Belongs to the RraA family. In terms of assembly, homotrimer. Binds to both RNA-binding sites in the C-terminal region of Rne and to RhlB.

The protein localises to the cytoplasm. Its function is as follows. Globally modulates RNA abundance by binding to RNase E (Rne) and regulating its endonucleolytic activity. Can modulate Rne action in a substrate-dependent manner by altering the composition of the degradosome. Modulates RNA-binding and helicase activities of the degradosome. This Histophilus somni (strain 129Pt) (Haemophilus somnus) protein is Regulator of ribonuclease activity A.